The sequence spans 161 residues: MPSDLCPDLQALAPLLGSWVGRGMGKYPTIQPFEYLEEVVFSHLDRPFLTYTQKTRAITDGKPLHAETGYLRVPQPGHIELVLAHHSDIAEIEVGTYSVTGDLIEVELVTTTIGLVPTAKQVTALGRFFRIDGDEFAYSVQMGAVGQPLQDHLVAVLHRKQ.

The short motif at 17 to 23 (GSWVGRG) is the GXWXGXG element. Residue H152 participates in heme b binding.

This sequence belongs to the nitrobindin family. Homodimer. Heme b serves as cofactor.

It carries out the reaction peroxynitrite = nitrate. It functions in the pathway nitrogen metabolism. Heme-binding protein able to scavenge peroxynitrite and to protect free L-tyrosine against peroxynitrite-mediated nitration, by acting as a peroxynitrite isomerase that converts peroxynitrite to nitrate. Therefore, this protein likely plays a role in peroxynitrite sensing and in the detoxification of reactive nitrogen and oxygen species (RNS and ROS, respectively). Is able to bind nitric oxide (NO) in vitro, but may act as a sensor of peroxynitrite levels in vivo. In Mycobacterium leprae (strain TN), this protein is Peroxynitrite isomerase.